The chain runs to 142 residues: Coactosin-like protein (142 aa).

Ala-2 is subject to N-acetylalanine. The region spanning 2-130 (ATKIDKEACR…EEDFIKSELK (129 aa)) is the ADF-H domain. Positions 66-75 (TGDAMSKRSK) are flexible and important for F-actin binding. N6-acetyllysine occurs at positions 102 and 126.

It belongs to the actin-binding proteins ADF family. Coactosin subfamily. Interacts with 5-lipoxygenase (ALOX5/5LO) in a calcium-independent manner. Binds to F-actin with a stoichiometry of 1:2. In terms of tissue distribution, widely expressed with highest levels in placenta, lung, kidney and peripheral blood leukocytes and lower levels in brain, liver and pancreas.

It localises to the cytoplasm. The protein localises to the cytoskeleton. Its subcellular location is the nucleus. Functionally, binds to F-actin in a calcium-independent manner. Has no direct effect on actin depolymerization. Acts as a chaperone for ALOX5 (5LO), influencing both its stability and activity in leukotrienes synthesis. The chain is Coactosin-like protein (COTL1) from Homo sapiens (Human).